The chain runs to 497 residues: 4,4'-diaponeurosporene oxygenase (497 aa).

An FAD-binding site is contributed by 7-19; the sequence is VIGGGLGGISAAI.

This sequence belongs to the carotenoid/retinoid oxidoreductase family. CrtP subfamily. Requires FAD as cofactor.

It catalyses the reaction all-trans-4,4'-diaponeurosporene + 2 AH2 + 2 O2 = 4,4'-diaponeurosporenal + 2 A + 3 H2O. The protein operates within carotenoid biosynthesis; staphyloxanthin biosynthesis; staphyloxanthin from farnesyl diphosphate: step 3/5. Involved in the biosynthesis of the yellow-orange carotenoid staphyloxanthin, which plays a role in the virulence via its protective function against oxidative stress. Catalyzes the oxidation of the terminal methyl side group of 4,4'-diaponeurosporene to form 4,4'-diaponeurosporen-4-al. The C40 carotenoid lycopene is a poor substrate. This is 4,4'-diaponeurosporene oxygenase from Staphylococcus aureus (strain Mu50 / ATCC 700699).